The chain runs to 230 residues: Orotidine 5'-phosphate decarboxylase (230 aa).

Substrate-binding positions include Asp11, Lys34, 61–70 (DLKLHDIPNT), Thr117, Arg179, Gln188, Gly208, and Arg209. Lys63 serves as the catalytic Proton donor.

It belongs to the OMP decarboxylase family. Type 1 subfamily. As to quaternary structure, homodimer.

The enzyme catalyses orotidine 5'-phosphate + H(+) = UMP + CO2. The protein operates within pyrimidine metabolism; UMP biosynthesis via de novo pathway; UMP from orotate: step 2/2. Its function is as follows. Catalyzes the decarboxylation of orotidine 5'-monophosphate (OMP) to uridine 5'-monophosphate (UMP). This chain is Orotidine 5'-phosphate decarboxylase, found in Streptococcus pyogenes serotype M18 (strain MGAS8232).